A 424-amino-acid chain; its full sequence is Phosphomethylpyrimidine synthase 2 (424 aa).

Substrate is bound by residues Asn-65, Met-94, Tyr-123, His-162, 184–186, 225–228, and Glu-264; these read SRG and DGLR. Position 268 (His-268) interacts with Zn(2+). Tyr-291 is a substrate binding site. His-332 contributes to the Zn(2+) binding site. [4Fe-4S] cluster contacts are provided by Cys-408, Cys-411, and Cys-415.

This sequence belongs to the ThiC family. Requires [4Fe-4S] cluster as cofactor.

It carries out the reaction 5-amino-1-(5-phospho-beta-D-ribosyl)imidazole + S-adenosyl-L-methionine = 4-amino-2-methyl-5-(phosphooxymethyl)pyrimidine + CO + 5'-deoxyadenosine + formate + L-methionine + 3 H(+). The protein operates within cofactor biosynthesis; thiamine diphosphate biosynthesis. In terms of biological role, catalyzes the synthesis of the hydroxymethylpyrimidine phosphate (HMP-P) moiety of thiamine from aminoimidazole ribotide (AIR) in a radical S-adenosyl-L-methionine (SAM)-dependent reaction. This Methanothermobacter thermautotrophicus (strain ATCC 29096 / DSM 1053 / JCM 10044 / NBRC 100330 / Delta H) (Methanobacterium thermoautotrophicum) protein is Phosphomethylpyrimidine synthase 2.